The following is a 494-amino-acid chain: Chromosomal replication initiator protein DnaA (494 aa).

The interval 1 to 103 is domain I, interacts with DnaA modulators; it reads MTTDPDPPFV…PVSDESDSGS (103 aa). The tract at residues 94–117 is disordered; sequence PVSDESDSGSVASPAPVAAADPDD. The segment covering 101–113 has biased composition (low complexity); the sequence is SGSVASPAPVAAA. Positions 104 to 153 are domain II; the sequence is VASPAPVAAADPDDDVVDDDLAARASAEESWPSYFTNRANRAAEDDATSV. The segment at 154-370 is domain III, AAA+ region; that stretch reads NLNRRYTFDT…GALIRVTAFA (217 aa). Positions 198, 200, 201, and 202 each coordinate ATP. Residues 371 to 494 are domain IV, binds dsDNA; that stretch reads SLNKTPIDKS…TTRIRQRAKR (124 aa).

It belongs to the DnaA family. In terms of assembly, oligomerizes as a right-handed, spiral filament on DNA at oriC.

It localises to the cytoplasm. Plays an essential role in the initiation and regulation of chromosomal replication. ATP-DnaA binds to the origin of replication (oriC) to initiate formation of the DNA replication initiation complex once per cell cycle. Binds the DnaA box (a 9 base pair repeat at the origin) and separates the double-stranded (ds)DNA. Forms a right-handed helical filament on oriC DNA; dsDNA binds to the exterior of the filament while single-stranded (ss)DNA is stabiized in the filament's interior. The ATP-DnaA-oriC complex binds and stabilizes one strand of the AT-rich DNA unwinding element (DUE), permitting loading of DNA polymerase. After initiation quickly degrades to an ADP-DnaA complex that is not apt for DNA replication. Binds acidic phospholipids. This chain is Chromosomal replication initiator protein DnaA, found in Mycolicibacterium vanbaalenii (strain DSM 7251 / JCM 13017 / BCRC 16820 / KCTC 9966 / NRRL B-24157 / PYR-1) (Mycobacterium vanbaalenii).